The chain runs to 592 residues: MKGPITFLLQLGAVYTSIASACKLSDLPILSAHGSYGSNQCIAFGGEQAVIDRLIDPQACDIPKLIEATADQLQDGLTKGCFTSVDLVKVRITLQTPYRQGNVLIIVVVQTYVARIAEVNSTVRAVTEINPDALTIAKQMDNERKMGKLRGPLHGLPIVIKNNIFTDDKMSSTAGSYAIFGARTSADATVATKLREAGLVIMGKSGASQWANFRSLNSTNGWSAYGGQVTAAYIKNQDPSGSSSGSGVASDLGLAFATLGTETSGSIVSPADKSNIVGLKPTVGLTSRRFVVPISERQDTVGPMARSVKDAAYLLQVIAGKDSNDNYTSAIPFDTIPDYVKACDINALKGKRIGVPRNVIKIFGSPQTVVDQFNQALAVMKKAGAIIVENTDFTSFAEFAQSPIPDDILYADSLTNLPAFFKQLKVNPHNITDLESLRRFTQHHRLEEYPSRDTARWDIALQKGIKNTDPKFWPMYQKNVKFGNEGGILGALRRHKLDAAVLPTDLSPYIPALIGSPIITVPMGVYPNGTKVNHDRELVTSGPGIPIGIGFMGDLWSEEKLIGLAYAFEQKTHARPKLKRFIQPKKEVKGIL.

The first 21 residues, 1–21, serve as a signal peptide directing secretion; sequence MKGPITFLLQLGAVYTSIASA. Residue Asn-120 is glycosylated (N-linked (GlcNAc...) asparagine). Lys-161 (charge relay system) is an active-site residue. A glycan (N-linked (GlcNAc...) asparagine) is linked at Asn-217. Ser-242 functions as the Charge relay system in the catalytic mechanism. Substrate-binding positions include Ser-242 and 263–266; that span reads TSGS. The Acyl-ester intermediate role is filled by Ser-266. N-linked (GlcNAc...) asparagine glycans are attached at residues Asn-326, Asn-430, and Asn-528.

The protein belongs to the amidase family.

The protein localises to the secreted. The polypeptide is Putative amidase ARB_02965 (Arthroderma benhamiae (strain ATCC MYA-4681 / CBS 112371) (Trichophyton mentagrophytes)).